The following is a 222-amino-acid chain: GTP cyclohydrolase 1 (222 aa).

Zn(2+) is bound by residues cysteine 111, histidine 114, and cysteine 182.

Belongs to the GTP cyclohydrolase I family. In terms of assembly, toroid-shaped homodecamer, composed of two pentamers of five dimers.

The enzyme catalyses GTP + H2O = 7,8-dihydroneopterin 3'-triphosphate + formate + H(+). It participates in cofactor biosynthesis; 7,8-dihydroneopterin triphosphate biosynthesis; 7,8-dihydroneopterin triphosphate from GTP: step 1/1. The sequence is that of GTP cyclohydrolase 1 from Klebsiella pneumoniae subsp. pneumoniae (strain ATCC 700721 / MGH 78578).